A 934-amino-acid chain; its full sequence is 2-oxoglutarate dehydrogenase E1 component (934 aa).

This sequence belongs to the alpha-ketoglutarate dehydrogenase family. In terms of assembly, homodimer. Part of the 2-oxoglutarate dehydrogenase (OGDH) complex composed of E1 (2-oxoglutarate dehydrogenase), E2 (dihydrolipoamide succinyltransferase) and E3 (dihydrolipoamide dehydrogenase); the complex contains multiple copies of the three enzymatic components (E1, E2 and E3). Thiamine diphosphate serves as cofactor.

The catalysed reaction is N(6)-[(R)-lipoyl]-L-lysyl-[protein] + 2-oxoglutarate + H(+) = N(6)-[(R)-S(8)-succinyldihydrolipoyl]-L-lysyl-[protein] + CO2. E1 component of the 2-oxoglutarate dehydrogenase (OGDH) complex which catalyzes the decarboxylation of 2-oxoglutarate, the first step in the conversion of 2-oxoglutarate to succinyl-CoA and CO(2). This Coxiella burnetii (strain RSA 493 / Nine Mile phase I) protein is 2-oxoglutarate dehydrogenase E1 component (sucA).